A 281-amino-acid polypeptide reads, in one-letter code: HTH-type transcriptional activator RhaR (281 aa).

Positions 178-276 (DKLLAALAAS…GMSPGQWRQR (99 aa)) constitute an HTH araC/xylS-type domain. 2 DNA-binding regions (H-T-H motif) span residues 195-216 (ERFC…RQQT) and 243-266 (IGDI…SREI).

As to quaternary structure, binds DNA as a dimer.

It is found in the cytoplasm. Functionally, activates expression of the rhaSR operon in response to L-rhamnose. This chain is HTH-type transcriptional activator RhaR, found in Klebsiella pneumoniae subsp. pneumoniae (strain ATCC 700721 / MGH 78578).